We begin with the raw amino-acid sequence, 173 residues long: Crossover junction endodeoxyribonuclease RuvC (173 aa).

Residues Asp-8, Glu-67, and Asp-139 contribute to the active site. Asp-8, Glu-67, and Asp-139 together coordinate Mg(2+).

The protein belongs to the RuvC family. As to quaternary structure, homodimer which binds Holliday junction (HJ) DNA. The HJ becomes 2-fold symmetrical on binding to RuvC with unstacked arms; it has a different conformation from HJ DNA in complex with RuvA. In the full resolvosome a probable DNA-RuvA(4)-RuvB(12)-RuvC(2) complex forms which resolves the HJ. Mg(2+) is required as a cofactor.

It is found in the cytoplasm. The enzyme catalyses Endonucleolytic cleavage at a junction such as a reciprocal single-stranded crossover between two homologous DNA duplexes (Holliday junction).. Its function is as follows. The RuvA-RuvB-RuvC complex processes Holliday junction (HJ) DNA during genetic recombination and DNA repair. Endonuclease that resolves HJ intermediates. Cleaves cruciform DNA by making single-stranded nicks across the HJ at symmetrical positions within the homologous arms, yielding a 5'-phosphate and a 3'-hydroxyl group; requires a central core of homology in the junction. The consensus cleavage sequence is 5'-(A/T)TT(C/G)-3'. Cleavage occurs on the 3'-side of the TT dinucleotide at the point of strand exchange. HJ branch migration catalyzed by RuvA-RuvB allows RuvC to scan DNA until it finds its consensus sequence, where it cleaves and resolves the cruciform DNA. The protein is Crossover junction endodeoxyribonuclease RuvC of Cronobacter sakazakii (strain ATCC BAA-894) (Enterobacter sakazakii).